The following is a 318-amino-acid chain: Thymidylate synthase (318 aa).

DUMP-binding positions include Arg-25 and 180–181 (RR). The Nucleophile role is filled by Cys-200. Residues 220 to 223 (RSAD), Asn-231, and 261 to 263 (HIY) each bind dUMP. Residue Asp-223 participates in (6R)-5,10-methylene-5,6,7,8-tetrahydrofolate binding. Position 317 (Ala-317) interacts with (6R)-5,10-methylene-5,6,7,8-tetrahydrofolate.

Belongs to the thymidylate synthase family. Bacterial-type ThyA subfamily. Homodimer.

The protein localises to the cytoplasm. The enzyme catalyses dUMP + (6R)-5,10-methylene-5,6,7,8-tetrahydrofolate = 7,8-dihydrofolate + dTMP. It participates in pyrimidine metabolism; dTTP biosynthesis. Catalyzes the reductive methylation of 2'-deoxyuridine-5'-monophosphate (dUMP) to 2'-deoxythymidine-5'-monophosphate (dTMP) while utilizing 5,10-methylenetetrahydrofolate (mTHF) as the methyl donor and reductant in the reaction, yielding dihydrofolate (DHF) as a by-product. This enzymatic reaction provides an intracellular de novo source of dTMP, an essential precursor for DNA biosynthesis. In Ligilactobacillus salivarius (strain UCC118) (Lactobacillus salivarius), this protein is Thymidylate synthase.